A 231-amino-acid polypeptide reads, in one-letter code: Eukaryotic translation initiation factor 4E allele A (231 aa).

Over residues 1–20 the composition is skewed to basic and acidic residues; the sequence is MAAAEMERTTSFDAAEKLKA. The disordered stretch occupies residues 1–36; it reads MAAAEMERTTSFDAAEKLKAADAGGGEVDDELEEGE. Acidic residues predominate over residues 27–36; that stretch reads EVDDELEEGE. 2 EIF4G-binding regions span residues 56 to 59 and 66 to 102; these read HPLE and FDSP…NNIH. Residues 74–79, Lys-106, and 124–125 contribute to the mRNA site; these read RQTAWG and WE. A disulfide bond links Cys-129 and Cys-167. Positions 150–159 are EIF4G-binding; it reads YTLLAMIGHQ. Residues 174-179 and 219-223 contribute to the mRNA site; these read RSKGEK and KRLDR.

The protein belongs to the eukaryotic initiation factor 4E family. As to quaternary structure, EIF4F is a multi-subunit complex, the composition of which varies with external and internal environmental conditions. It is composed of at least EIF4A, EIF4E and EIF4G. EIF4E is also known to interact with other partners. In higher plants two isoforms of EIF4F have been identified, named isoform EIF4F and isoform EIF(iso)4F. Isoform EIF4F has subunits p220 and p26, whereas isoform EIF(iso)4F has subunits p82 and p28. In terms of assembly, (Microbial infection) Interacts with viral genome-linked protein (VPg); this interaction is possible in susceptible hosts but impaired in resistant plants. In terms of processing, according to the redox status, the Cys-129-Cys-167 disulfide bridge may have a role in regulating protein function by affecting its ability to bind capped mRNA.

The protein localises to the nucleus. The protein resides in the cytoplasm. Component of the protein complex eIF4F, which is involved in the recognition of the mRNA cap, ATP-dependent unwinding of 5'-terminal secondary structure and recruitment of mRNA to the ribosome. Recognizes and binds the 7-methylguanosine-containing mRNA cap during an early step in the initiation of protein synthesis and facilitates ribosome binding by inducing the unwinding of the mRNAs secondary structures. Key component of recessive resistance to potyviruses. Its function is as follows. (Microbial infection) Susceptibility host factor required for viral infection (e.g. Potato virus Y (PVY)) by recruiting viral RNAs to the host ribosomal complex via an interaction with viral genome-linked protein (VPg). The protein is Eukaryotic translation initiation factor 4E allele A of Solanum tuberosum (Potato).